The sequence spans 825 residues: Glycerol-3-phosphate acyltransferase (825 aa).

The short motif at 304–309 (CHRSHM) is the HXXXXD motif element. A disordered region spans residues 803-825 (MPAETSNQPEAPETPEPEGKTES).

It belongs to the GPAT/DAPAT family.

Its subcellular location is the cell inner membrane. It catalyses the reaction sn-glycerol 3-phosphate + an acyl-CoA = a 1-acyl-sn-glycero-3-phosphate + CoA. Its pathway is phospholipid metabolism; CDP-diacylglycerol biosynthesis; CDP-diacylglycerol from sn-glycerol 3-phosphate: step 1/3. The chain is Glycerol-3-phosphate acyltransferase from Yersinia pseudotuberculosis serotype O:1b (strain IP 31758).